Reading from the N-terminus, the 350-residue chain is Nicotinate-nucleotide--dimethylbenzimidazole phosphoribosyltransferase (350 aa).

Glutamate 317 functions as the Proton acceptor in the catalytic mechanism.

The protein belongs to the CobT family.

It carries out the reaction 5,6-dimethylbenzimidazole + nicotinate beta-D-ribonucleotide = alpha-ribazole 5'-phosphate + nicotinate + H(+). The protein operates within nucleoside biosynthesis; alpha-ribazole biosynthesis; alpha-ribazole from 5,6-dimethylbenzimidazole: step 1/2. In terms of biological role, catalyzes the synthesis of alpha-ribazole-5'-phosphate from nicotinate mononucleotide (NAMN) and 5,6-dimethylbenzimidazole (DMB). This Shewanella sp. (strain ANA-3) protein is Nicotinate-nucleotide--dimethylbenzimidazole phosphoribosyltransferase.